Consider the following 249-residue polypeptide: 4-hydroxy-tetrahydrodipicolinate reductase (249 aa).

Residues 8–13 (GVTGQM), 87–89 (GTT), and 111–114 (ATNF) contribute to the NAD(+) site. The Proton donor/acceptor role is filled by His143. His144 contacts (S)-2,3,4,5-tetrahydrodipicolinate. Catalysis depends on Lys147, which acts as the Proton donor. 153–154 (GT) is a binding site for (S)-2,3,4,5-tetrahydrodipicolinate.

It belongs to the DapB family.

It localises to the cytoplasm. It carries out the reaction (S)-2,3,4,5-tetrahydrodipicolinate + NAD(+) + H2O = (2S,4S)-4-hydroxy-2,3,4,5-tetrahydrodipicolinate + NADH + H(+). It catalyses the reaction (S)-2,3,4,5-tetrahydrodipicolinate + NADP(+) + H2O = (2S,4S)-4-hydroxy-2,3,4,5-tetrahydrodipicolinate + NADPH + H(+). The protein operates within amino-acid biosynthesis; L-lysine biosynthesis via DAP pathway; (S)-tetrahydrodipicolinate from L-aspartate: step 4/4. Catalyzes the conversion of 4-hydroxy-tetrahydrodipicolinate (HTPA) to tetrahydrodipicolinate. The protein is 4-hydroxy-tetrahydrodipicolinate reductase of Haloarcula marismortui (strain ATCC 43049 / DSM 3752 / JCM 8966 / VKM B-1809) (Halobacterium marismortui).